We begin with the raw amino-acid sequence, 510 residues long: Probable cytochrome P450 4d20 (510 aa).

A heme-binding site is contributed by Cys-455.

The protein belongs to the cytochrome P450 family. Heme is required as a cofactor.

It is found in the endoplasmic reticulum membrane. The protein localises to the microsome membrane. Functionally, may be involved in the metabolism of insect hormones and in the breakdown of synthetic insecticides. The polypeptide is Probable cytochrome P450 4d20 (Cyp4d20) (Drosophila melanogaster (Fruit fly)).